The following is a 211-amino-acid chain: Probable septum site-determining protein MinC (211 aa).

Belongs to the MinC family. Interacts with MinD and FtsZ.

Its function is as follows. Cell division inhibitor that blocks the formation of polar Z ring septums. Rapidly oscillates between the poles of the cell to destabilize FtsZ filaments that have formed before they mature into polar Z rings. Prevents FtsZ polymerization. The polypeptide is Probable septum site-determining protein MinC (Clostridium perfringens (strain 13 / Type A)).